Here is a 233-residue protein sequence, read N- to C-terminus: Large ribosomal subunit protein uL1 (233 aa).

The protein belongs to the universal ribosomal protein uL1 family. As to quaternary structure, part of the 50S ribosomal subunit.

Binds directly to 23S rRNA. The L1 stalk is quite mobile in the ribosome, and is involved in E site tRNA release. Functionally, protein L1 is also a translational repressor protein, it controls the translation of the L11 operon by binding to its mRNA. The polypeptide is Large ribosomal subunit protein uL1 (Psychrobacter sp. (strain PRwf-1)).